The chain runs to 148 residues: Large ribosomal subunit protein bL9 (148 aa).

The protein belongs to the bacterial ribosomal protein bL9 family.

Functionally, binds to the 23S rRNA. The polypeptide is Large ribosomal subunit protein bL9 (Azotobacter vinelandii (strain DJ / ATCC BAA-1303)).